Here is a 337-residue protein sequence, read N- to C-terminus: Heme A synthase (337 aa).

A run of 5 helical transmembrane segments spans residues 6–26, 87–107, 119–139, 154–174, and 192–212; these read ITKW…IGGI, FIHR…LIYF, LPYI…WYMV, LAFH…QLIK, and LIFS…GALV. Histidine 256 is a binding site for heme. 3 helical membrane-spanning segments follow: residues 258-278, 285-305, and 308-328; these read LGSY…LTIE, IAYF…ITLL, and VPII…SIII. Residue histidine 316 participates in heme binding.

It belongs to the COX15/CtaA family. Type 2 subfamily. As to quaternary structure, interacts with CtaB. Heme b serves as cofactor.

Its subcellular location is the cell membrane. It catalyses the reaction Fe(II)-heme o + 2 A + H2O = Fe(II)-heme a + 2 AH2. Its pathway is porphyrin-containing compound metabolism; heme A biosynthesis; heme A from heme O: step 1/1. Functionally, catalyzes the conversion of heme O to heme A by two successive hydroxylations of the methyl group at C8. The first hydroxylation forms heme I, the second hydroxylation results in an unstable dihydroxymethyl group, which spontaneously dehydrates, resulting in the formyl group of heme A. This Rickettsia akari (strain Hartford) protein is Heme A synthase.